Consider the following 356-residue polypeptide: Holliday junction branch migration complex subunit RuvB (356 aa).

The tract at residues T4–Y190 is large ATPase domain (RuvB-L). ATP contacts are provided by residues L29, R30, G71, K74, T75, T76, E137–Y139, R180, Y190, and R227. A Mg(2+)-binding site is contributed by T75. Residues D191–D261 form a small ATPAse domain (RuvB-S) region. The segment at P264–R356 is head domain (RuvB-H). DNA is bound by residues R300, R319, and R324.

Belongs to the RuvB family. In terms of assembly, homohexamer. Forms an RuvA(8)-RuvB(12)-Holliday junction (HJ) complex. HJ DNA is sandwiched between 2 RuvA tetramers; dsDNA enters through RuvA and exits via RuvB. An RuvB hexamer assembles on each DNA strand where it exits the tetramer. Each RuvB hexamer is contacted by two RuvA subunits (via domain III) on 2 adjacent RuvB subunits; this complex drives branch migration. In the full resolvosome a probable DNA-RuvA(4)-RuvB(12)-RuvC(2) complex forms which resolves the HJ.

It is found in the cytoplasm. The enzyme catalyses ATP + H2O = ADP + phosphate + H(+). The RuvA-RuvB-RuvC complex processes Holliday junction (HJ) DNA during genetic recombination and DNA repair, while the RuvA-RuvB complex plays an important role in the rescue of blocked DNA replication forks via replication fork reversal (RFR). RuvA specifically binds to HJ cruciform DNA, conferring on it an open structure. The RuvB hexamer acts as an ATP-dependent pump, pulling dsDNA into and through the RuvAB complex. RuvB forms 2 homohexamers on either side of HJ DNA bound by 1 or 2 RuvA tetramers; 4 subunits per hexamer contact DNA at a time. Coordinated motions by a converter formed by DNA-disengaged RuvB subunits stimulates ATP hydrolysis and nucleotide exchange. Immobilization of the converter enables RuvB to convert the ATP-contained energy into a lever motion, pulling 2 nucleotides of DNA out of the RuvA tetramer per ATP hydrolyzed, thus driving DNA branch migration. The RuvB motors rotate together with the DNA substrate, which together with the progressing nucleotide cycle form the mechanistic basis for DNA recombination by continuous HJ branch migration. Branch migration allows RuvC to scan DNA until it finds its consensus sequence, where it cleaves and resolves cruciform DNA. In Burkholderia thailandensis (strain ATCC 700388 / DSM 13276 / CCUG 48851 / CIP 106301 / E264), this protein is Holliday junction branch migration complex subunit RuvB.